Consider the following 319-residue polypeptide: 12-(S)-hydroxy-5,8,10,14-eicosatetraenoic acid receptor (319 aa).

Residues 1–16 (MPFPNCSAPSTVVATA) lie on the Extracellular side of the membrane. N-linked (GlcNAc...) asparagine glycosylation is present at Asn-5. Residues 17-37 (VGVLLGLECGLGLLGNAVALW) form a helical membrane-spanning segment. Residues 38–52 (TFLFRVRVWKPYAVY) are Cytoplasmic-facing. Residues 53–73 (LLNLALADLLLAACLPFLAAF) form a helical membrane-spanning segment. Topologically, residues 74–91 (YLSLQAWHLGRVGCWALH) are extracellular. A helical transmembrane segment spans residues 92–110 (FLLDLSRSVGMAFLAAVAL). Residues 111 to 131 (DRYLRVVHPRLKVNLLSPQAA) are Cytoplasmic-facing. A helical membrane pass occupies residues 132-152 (LGVSGLVWLLMVALTCPGLLI). The Extracellular portion of the chain corresponds to 153 to 180 (SEAAQNSTRCHSFYSRADGSFSIIWQEA). The helical transmembrane segment at 181–201 (LSCLQFVLPFGLIVFCNAGII) threads the bilayer. Residues 202–219 (RALQKRLREPEKQPKLQR) lie on the Cytoplasmic side of the membrane. Residues 220-240 (AQALVTLVVVLFALCFLPCFL) traverse the membrane as a helical segment. Residues 241–265 (ARVLMHIFQNLGSCRALCAVAHTSD) lie on the Extracellular side of the membrane. The chain crosses the membrane as a helical span at residues 266–284 (VTGSLTYLHSVLNPVVYCF). At 285–319 (SSPTFRSSYRRVFHTLRGKGQAAEPPDFNPRDSYS) the chain is on the cytoplasmic side.

It belongs to the G-protein coupled receptor 1 family. Interacts with KRAS; in a farnesylation-dependent manner.

The protein resides in the cell membrane. High-affinity receptor for 12-(S)-hydroxy-5,8,10,14-eicosatetraenoic acid (12-S-HETE), with much lower affinities for other HETE isomers. 12-S-HETE is a eicosanoid, a 12-lipoxygenase (ALOX12) metabolite of arachidonic acid, involved in many physiologic and pathologic processes. 12-S-HETE-binding leads to activation of ERK1/2 (MAPK3/MAPK1), MEK, and NF-kappa-B pathways leading to cell growth. Plays a crucial role for proliferation, survival and macropinocytosis of KRAS-dependent cancer cells by mediating the translocation of KRAS from the endoplasmic reticulum to the plasma membrane (PM) and its association with the PM. Contributes to enhanced immune responses by inducing dendrite protrusion of small intestinal CX3CR1(+) phagocytes for the uptake of luminal antigens. Acts also as a key receptor for 12-(S)-HETE-mediated liver ischemia reperfusion injury. In terms of biological role, proton-sensing G protein-coupled receptor. The sequence is that of 12-(S)-hydroxy-5,8,10,14-eicosatetraenoic acid receptor (GPR31) from Homo sapiens (Human).